Here is a 238-residue protein sequence, read N- to C-terminus: Orotidine 5'-phosphate decarboxylase (238 aa).

Residues Asp10, Lys32, 59–68 (DLKLHDIPNT), Thr122, Arg184, Gln193, Gly213, and Arg214 each bind substrate. Catalysis depends on Lys61, which acts as the Proton donor.

This sequence belongs to the OMP decarboxylase family. Type 1 subfamily. In terms of assembly, homodimer.

The catalysed reaction is orotidine 5'-phosphate + H(+) = UMP + CO2. Its pathway is pyrimidine metabolism; UMP biosynthesis via de novo pathway; UMP from orotate: step 2/2. Functionally, catalyzes the decarboxylation of orotidine 5'-monophosphate (OMP) to uridine 5'-monophosphate (UMP). This Bacillus cereus (strain ATCC 10987 / NRS 248) protein is Orotidine 5'-phosphate decarboxylase.